The following is a 418-amino-acid chain: Oxalate:formate antiporter (418 aa).

12 consecutive transmembrane segments (helical) span residues 17–37 (WFYLVLAVLLMCMISGVQYSW), 48–68 (LGVSLAAVQTAFTLSQVIQAG), 84–104 (IPLMFGGAMVLAGWTFMGMVD), 108–128 (ALYALYTLAGAGVGIVYGIAM), 141–161 (LASGFTAAGYGLGVLPFLPLI), 172–192 (AAFMYTGLIMGILIILIAFVI), 222–242 (FWVLWTAFFSVNFGGLLLVAN), 250–270 (LGLAAGVLTIGVSIQNLFNGG), 288–308 (MSVVFGINAVVLALFPTIAAL), 311–331 (VAFIAMLAIAFFTWGGSYALF), 350–370 (FFWAAKATASIFGGGLGAAIA), and 378–398 (AFLITAITSFIAFALATFVIP). Lysine 355 provides a ligand contact to oxalate.

Belongs to the major facilitator superfamily. OFA (TC 2.A.1.11) family. Monomer.

The protein localises to the cell inner membrane. Functionally, anion transporter that carries out the exchange of divalent oxalate with monovalent formate, the product of oxalate decarboxylation, at the plasma membrane, and in doing so catalyzes the vectorial portion of a proton-motive metabolic cycle that drives ATP synthesis. The chain is Oxalate:formate antiporter (oxlT) from Oxalobacter formigenes.